A 212-amino-acid polypeptide reads, in one-letter code: Ribonuclease HII (212 aa).

The 199-residue stretch at 1–199 (MIGGIDEAGR…VGGRIGLGRN (199 aa)) folds into the RNase H type-2 domain. 3 residues coordinate a divalent metal cation: Asp-6, Glu-7, and Asp-101.

This sequence belongs to the RNase HII family. Mn(2+) serves as cofactor. The cofactor is Mg(2+).

The protein localises to the cytoplasm. The enzyme catalyses Endonucleolytic cleavage to 5'-phosphomonoester.. In terms of biological role, endonuclease that specifically degrades the RNA of RNA-DNA hybrids. This Pyrobaculum aerophilum (strain ATCC 51768 / DSM 7523 / JCM 9630 / CIP 104966 / NBRC 100827 / IM2) protein is Ribonuclease HII.